Reading from the N-terminus, the 715-residue chain is Polyribonucleotide nucleotidyltransferase (715 aa).

2 residues coordinate Mg(2+): Asp493 and Asp499. The KH domain maps to 560-619; it reads PRMITIKINPEKIRDVIGKGGSVIRALTEETGTTIDISDDGVVTIASTNSDGMAEAKKRI. Residues 629 to 697 enclose the S1 motif domain; sequence GQVYEGTVLK…EKGRVRLSAK (69 aa).

The protein belongs to the polyribonucleotide nucleotidyltransferase family. It depends on Mg(2+) as a cofactor.

The protein localises to the cytoplasm. The catalysed reaction is RNA(n+1) + phosphate = RNA(n) + a ribonucleoside 5'-diphosphate. Involved in mRNA degradation. Catalyzes the phosphorolysis of single-stranded polyribonucleotides processively in the 3'- to 5'-direction. The sequence is that of Polyribonucleotide nucleotidyltransferase from Burkholderia lata (strain ATCC 17760 / DSM 23089 / LMG 22485 / NCIMB 9086 / R18194 / 383).